The chain runs to 82 residues: Small ribosomal subunit protein bS16 (82 aa).

The protein belongs to the bacterial ribosomal protein bS16 family.

The polypeptide is Small ribosomal subunit protein bS16 (Yersinia pseudotuberculosis serotype O:1b (strain IP 31758)).